Here is a 189-residue protein sequence, read N- to C-terminus: Dual-action ribosomal maturation protein DarP (189 aa).

The interval 1–22 is disordered; sequence MWKNGAMRGCNKETGEFLGPSR.

The protein belongs to the DarP family.

The protein resides in the cytoplasm. Functionally, member of a network of 50S ribosomal subunit biogenesis factors which assembles along the 30S-50S interface, preventing incorrect 23S rRNA structures from forming. Promotes peptidyl transferase center (PTC) maturation. The sequence is that of Dual-action ribosomal maturation protein DarP from Xylella fastidiosa (strain Temecula1 / ATCC 700964).